A 338-amino-acid polypeptide reads, in one-letter code: Mitochondrial glutathione transporter SLC25A40 (338 aa).

Solcar repeat units follow at residues Val13–Leu131, Asn139–Trp223, and Pro233–Phe327. 6 helical membrane-spanning segments follow: residues Met19–Val39, Leu103–Thr123, Cys142–Leu162, Trp199–Leu220, Phe239–Val259, and Gly298–Ile318.

This sequence belongs to the mitochondrial carrier (TC 2.A.29) family.

The protein resides in the mitochondrion inner membrane. The catalysed reaction is glutathione(in) = glutathione(out). Functionally, probable mitochondrial transporter required for glutathione import into mitochondria. Glutathione, which plays key roles in oxidative metabolism, is produced exclusively in the cytosol and is imported in many organelles. Mitochondrial glutathione is required for the activity and stability of proteins containing iron-sulfur clusters, as well as erythropoiesis. The chain is Mitochondrial glutathione transporter SLC25A40 from Homo sapiens (Human).